The sequence spans 294 residues: MINGSIVALITPMNSDGTVDYASLERLVEFHIEQGTDAIVAVGTTGESATLPMTEHAAVVCQTVKFASGRIPVIGGNGANATAEAIELTKSMQKSGVVAMLGVTPYYNKPTPKGLIAHYTAVAASTDIPQILYNVPGRTAVDMKPETVAELSSVSNIIGVKEATGDLSRVARLRELCGEDFLLYSGDDATAREFLLLGGNGVISVANNIVPHAFKAMCDAALAKNAQLAETIDQPLTGIYRSLFCEANPIPVKWAVHRMGLIANGHIRLPLTELSEQFHGLLIETMKQAHIEVK.

Thr45 serves as a coordination point for pyruvate. The active-site Proton donor/acceptor is the Tyr133. Residue Lys161 is the Schiff-base intermediate with substrate of the active site. Ile203 is a pyruvate binding site.

Belongs to the DapA family. As to quaternary structure, homotetramer; dimer of dimers.

The protein resides in the cytoplasm. The catalysed reaction is L-aspartate 4-semialdehyde + pyruvate = (2S,4S)-4-hydroxy-2,3,4,5-tetrahydrodipicolinate + H2O + H(+). It participates in amino-acid biosynthesis; L-lysine biosynthesis via DAP pathway; (S)-tetrahydrodipicolinate from L-aspartate: step 3/4. Functionally, catalyzes the condensation of (S)-aspartate-beta-semialdehyde [(S)-ASA] and pyruvate to 4-hydroxy-tetrahydrodipicolinate (HTPA). This is 4-hydroxy-tetrahydrodipicolinate synthase from Shewanella frigidimarina (strain NCIMB 400).